The sequence spans 133 residues: ATP synthase epsilon chain, chloroplastic (133 aa).

It belongs to the ATPase epsilon chain family. As to quaternary structure, F-type ATPases have 2 components, CF(1) - the catalytic core - and CF(0) - the membrane proton channel. CF(1) has five subunits: alpha(3), beta(3), gamma(1), delta(1), epsilon(1). CF(0) has three main subunits: a, b and c.

The protein resides in the plastid. It localises to the chloroplast thylakoid membrane. Produces ATP from ADP in the presence of a proton gradient across the membrane. This chain is ATP synthase epsilon chain, chloroplastic, found in Zygnema circumcarinatum (Green alga).